The following is a 57-amino-acid chain: Sec-independent protein translocase protein TatAy (57 aa).

Residues 1–21 form a helical membrane-spanning segment; that stretch reads MPIGPGSLAVIAIVALIIFGP.

This sequence belongs to the TatA/E family. Forms a complex with TatCy. Two types of complexes exist: one composed of TatAy and TatCy, and another composed only of TatAy. Cytosolic TatA forms large complexes or aggregates.

The protein localises to the cell membrane. It localises to the cytoplasm. Its subcellular location is the cytosol. Its function is as follows. Part of the twin-arginine translocation (Tat) system that transports large folded proteins containing a characteristic twin-arginine motif in their signal peptide across membranes. TatA could form the protein-conducting channel of the Tat system. Required for YwbN secretion. The sequence is that of Sec-independent protein translocase protein TatAy from Bacillus subtilis (strain 168).